A 689-amino-acid polypeptide reads, in one-letter code: Translation initiation factor IF-2 (689 aa).

The disordered stretch occupies residues 41–109 (DYERVFGGGN…EAPAAEEREA (69 aa)). Positions 61–70 (RKGRQKKRRR) are enriched in basic residues. Residues 80–94 (RGPRAAAPSRPSRGR) show a composition bias toward low complexity. Residues 96-109 (AAREEAPAAEEREA) are compositionally biased toward basic and acidic residues. The tr-type G domain maps to 192-361 (EKPPVITVMG…LVVAELEELR (170 aa)). Positions 201-208 (GHVDHGKT) are G1. Residue 201–208 (GHVDHGKT) coordinates GTP. The tract at residues 226 to 230 (GITQH) is G2. The segment at 247-250 (DTPG) is G3. GTP-binding positions include 247 to 251 (DTPGH) and 301 to 304 (NKID). The interval 301-304 (NKID) is G4. The segment at 337 to 339 (SAK) is G5.

This sequence belongs to the TRAFAC class translation factor GTPase superfamily. Classic translation factor GTPase family. IF-2 subfamily.

The protein resides in the cytoplasm. In terms of biological role, one of the essential components for the initiation of protein synthesis. Protects formylmethionyl-tRNA from spontaneous hydrolysis and promotes its binding to the 30S ribosomal subunits. Also involved in the hydrolysis of GTP during the formation of the 70S ribosomal complex. The chain is Translation initiation factor IF-2 from Rubrobacter xylanophilus (strain DSM 9941 / JCM 11954 / NBRC 16129 / PRD-1).